The primary structure comprises 102 residues: Large ribosomal subunit protein uL24 (102 aa).

This sequence belongs to the universal ribosomal protein uL24 family. Part of the 50S ribosomal subunit.

Its function is as follows. One of two assembly initiator proteins, it binds directly to the 5'-end of the 23S rRNA, where it nucleates assembly of the 50S subunit. One of the proteins that surrounds the polypeptide exit tunnel on the outside of the subunit. This Leuconostoc citreum (strain KM20) protein is Large ribosomal subunit protein uL24.